Consider the following 372-residue polypeptide: Transaldolase 2 (372 aa).

The active-site Schiff-base intermediate with substrate is K140.

This sequence belongs to the transaldolase family. Type 2 subfamily.

It is found in the cytoplasm. It catalyses the reaction D-sedoheptulose 7-phosphate + D-glyceraldehyde 3-phosphate = D-erythrose 4-phosphate + beta-D-fructose 6-phosphate. The protein operates within carbohydrate degradation; pentose phosphate pathway; D-glyceraldehyde 3-phosphate and beta-D-fructose 6-phosphate from D-ribose 5-phosphate and D-xylulose 5-phosphate (non-oxidative stage): step 2/3. Functionally, transaldolase is important for the balance of metabolites in the pentose-phosphate pathway. The protein is Transaldolase 2 of Streptomyces coelicolor (strain ATCC BAA-471 / A3(2) / M145).